A 218-amino-acid chain; its full sequence is MALPLIQIALDNLSLASALNDLAKVGDAVDVIEVGTILLTAEGVNAVKEIAKRYPHKLIVADGKIADTGKVFNQMFFDAGAHFTTVICAAELPTVKDVVTVGNSYTPIKETQVEMTSNFTWEQVTQWKQVGVQQVVWHRSRDAQAAGVNWSDKDLQAVKRLADLGFKVTVTGGITLNDIQLFKDIPIYIFIAGRTIRDASDPLQTVQQFKDEFHKYWK.

D11 contacts substrate. The Mg(2+) site is built by E33 and D62. Residue R194 participates in substrate binding.

It belongs to the HPS/KGPDC family. KGPDC subfamily. Requires Mg(2+) as cofactor.

The enzyme catalyses 3-dehydro-L-gulonate 6-phosphate + H(+) = L-xylulose 5-phosphate + CO2. It participates in cofactor degradation; L-ascorbate degradation; D-xylulose 5-phosphate from L-ascorbate: step 2/4. Functionally, catalyzes the decarboxylation of 3-keto-L-gulonate-6-P into L-xylulose-5-P. Is involved in the anaerobic L-ascorbate utilization. The protein is Probable 3-keto-L-gulonate-6-phosphate decarboxylase (ulaD) of Mycoplasma pneumoniae (strain ATCC 29342 / M129 / Subtype 1) (Mycoplasmoides pneumoniae).